We begin with the raw amino-acid sequence, 227 residues long: 2,3-bisphosphoglycerate-dependent phosphoglycerate mutase (227 aa).

Residues 7–14 (RHGQSEWN), 20–21 (TG), R59, 86–89 (ERHY), K97, 113–114 (RR), and 182–183 (GN) contribute to the substrate site. Catalysis depends on H8, which acts as the Tele-phosphohistidine intermediate. Residue E86 is the Proton donor/acceptor of the active site.

The protein belongs to the phosphoglycerate mutase family. BPG-dependent PGAM subfamily. In terms of assembly, homodimer.

It carries out the reaction (2R)-2-phosphoglycerate = (2R)-3-phosphoglycerate. Its pathway is carbohydrate degradation; glycolysis; pyruvate from D-glyceraldehyde 3-phosphate: step 3/5. Functionally, catalyzes the interconversion of 2-phosphoglycerate and 3-phosphoglycerate. The protein is 2,3-bisphosphoglycerate-dependent phosphoglycerate mutase of Neisseria meningitidis serogroup C (strain 053442).